The chain runs to 318 residues: HPr kinase/phosphorylase (318 aa).

Active-site residues include His-143 and Lys-164. 158–165 (GKSGVGKS) provides a ligand contact to ATP. Ser-165 is a Mg(2+) binding site. Asp-182 serves as the catalytic Proton acceptor; for phosphorylation activity. Proton donor; for dephosphorylation activity. Residues 206–215 (MEIRGLGILN) form an important for the catalytic mechanism of both phosphorylation and dephosphorylation region. Glu-207 contacts Mg(2+). The active site involves Arg-248. The tract at residues 269 to 274 (PVKPGR) is important for the catalytic mechanism of dephosphorylation.

It belongs to the HPrK/P family. As to quaternary structure, homohexamer. It depends on Mg(2+) as a cofactor.

The enzyme catalyses [HPr protein]-L-serine + ATP = [HPr protein]-O-phospho-L-serine + ADP + H(+). The catalysed reaction is [HPr protein]-O-phospho-L-serine + phosphate + H(+) = [HPr protein]-L-serine + diphosphate. In terms of biological role, catalyzes the ATP- as well as the pyrophosphate-dependent phosphorylation of a specific serine residue in HPr, a phosphocarrier protein of the phosphoenolpyruvate-dependent sugar phosphotransferase system (PTS). HprK/P also catalyzes the pyrophosphate-producing, inorganic phosphate-dependent dephosphorylation (phosphorolysis) of seryl-phosphorylated HPr (P-Ser-HPr). The polypeptide is HPr kinase/phosphorylase (Leptospira borgpetersenii serovar Hardjo-bovis (strain JB197)).